The following is a 73-amino-acid chain: Large ribosomal subunit protein bL31 (73 aa).

Belongs to the bacterial ribosomal protein bL31 family. Type A subfamily. As to quaternary structure, part of the 50S ribosomal subunit.

In terms of biological role, binds the 23S rRNA. This chain is Large ribosomal subunit protein bL31, found in Paracoccus denitrificans (strain Pd 1222).